Reading from the N-terminus, the 1111-residue chain is Cell death abnormality protein 1 (1111 aa).

Positions 1 to 18 are cleaved as a signal peptide; it reads MRLILLVLLATWQVVVDT. Topologically, residues 19–910 are extracellular; sequence RAPTFPDKLT…NGAGRSTGLT (892 aa). An EMI domain is found at 41 to 113; sequence GDHVCTVKTI…QCCDGYYQTK (73 aa). 15 disulfides stabilise this stretch: C45–C106, C71–C80, C105–C117, C121–C130, C125–C136, C138–C147, C160–C172, C166–C179, C181–C190, C203–C215, C209–C221, C223–C232, C245–C257, C251–C264, and C266–C275. Residue N66 is glycosylated (N-linked (GlcNAc...) asparagine). 4 consecutive EGF-like domains span residues 118–148, 156–191, 199–233, and 241–276; these read LPDCNPPCKKGKCIEPGKCECDPGYGGKYCA, WGLGCSKSCDCENGANCDPELGTCICTSGFQGERCE, WGPNCVKSCPCQNGGKCNKEGKCVCSDGWGGEFCL, and FGAECKFECNCQNGATCDNTNGKCICKSGYHGALCE. N-linked (GlcNAc...) asparagine glycans are attached at residues N333 and N345. One can recognise an EGF-like 5 domain in the interval 421 to 458; it reads YGPNCEKQAMCDWNHASECNPETGSCVCKPGRTGKNCS. 3 disulfide bridges follow: C425–C439, C431–C446, and C448–C457. N456 carries an N-linked (GlcNAc...) asparagine glycan. The FU repeat unit spans residues 629-680; it reads DQKCDPNTFGFLCQETVTPSPCASTDPKNGVCLSCPPGSSGIHCEHNCPAGS. Positions 681 to 716 constitute an EGF-like 6 domain; it reads YGDGCQQVCSCADGHGCDPTTGECICEPGYHGKTCS. Intrachain disulfides connect C685/C697, C691/C704, and C706/C715. A helical membrane pass occupies residues 911 to 931; sequence WFFVLLIVALCGGLGLIALFY. The interaction with trim-21 stretch occupies residues 931–1007; the sequence is YRNKYQKEKD…EEELENKKIH (77 aa). Over 932–1111 the chain is Cytoplasmic; it reads RNKYQKEKDP…KKRAQDNLYT (180 aa). Disordered stretches follow at residues 940–993 and 1006–1111; these read DPDM…PNGL and IHGR…NLYT. Residues 962–965 carry the NPXY motif; the sequence is NPLY. Positions 963–980 are enriched in polar residues; the sequence is PLYSRQSVFPDSDAFSSE. The residue at position 1019 (Y1019) is a Phosphotyrosine; by SRC. Positions 1019-1022 match the YXXL motif; the sequence is YASL. Low complexity predominate over residues 1030 to 1039; that stretch reads SSSSASASAS. Residues 1068–1083 are compositionally biased toward polar residues; sequence NSISPAHAVTTSNHNE.

As to quaternary structure, interacts (via C-terminus) with ced-6 (via PTB domain). Interacts with nck-1; the interaction is required for ced-1 degradation through the proteasome pathway. Interacts with V-ATPase vha-10. Phosphorylation of Tyr-1019, within the YXXL motif, by src-1 is thought to initiate phagosomal formation. In terms of processing, 'Lys-48'-linked polyubiquitination by trim-21 leads to proteasomal degradation. Expressed in engulfing cells and syncytium hypodermal cells. Ced-7 is necessary for clustering around cell corpses prior to engulfment.

The protein resides in the cell membrane. The protein localises to the cytoplasmic vesicle. It is found in the phagosome membrane. Its function is as follows. Involved in programmed cell death, also called apoptosis, in both somatic and germ cells. Acts by recruiting ced-6 to phagosomes which enables actin-dependent cytoskeletal reorganization and subsequent engulfment of the apoptotic cell corpse. Has a role in the association of ppk-3 and rab-7 with the phagosomal surface which is necessary for the incorporation of lysosomes to phagosomes during phagosome maturation. Activates the expression of unfolded protein response genes, which are involved in the immune response to live bacteria. This is Cell death abnormality protein 1 from Caenorhabditis elegans.